We begin with the raw amino-acid sequence, 330 residues long: Ferredoxin--NADP reductase (330 aa).

FAD-binding residues include Glu-35, Gln-43, Tyr-48, Val-90, Phe-123, Asp-285, and Thr-326.

The protein belongs to the ferredoxin--NADP reductase type 2 family. As to quaternary structure, homodimer. It depends on FAD as a cofactor.

It catalyses the reaction 2 reduced [2Fe-2S]-[ferredoxin] + NADP(+) + H(+) = 2 oxidized [2Fe-2S]-[ferredoxin] + NADPH. The protein is Ferredoxin--NADP reductase of Streptococcus agalactiae serotype Ia (strain ATCC 27591 / A909 / CDC SS700).